The following is a 944-amino-acid chain: MFKKLLGDPNTRKLKRYFPLVSDVNIFEEDLLSLSDDDLRTRTSEFRSKLEKVSSPNEELSLLDELLPEAFAVVREASKRVLGMRHFDVQLIGGMVLHEGQIAEMKTGEGKTLVATLPSYLNALTGRGVHVVTVNDYLARRDAEWMGQIHRFLGLSVGLVQQSMAPLERKKNYECDITYATNSELGFDYLRDNMAADKSEIVQRDFQFCVIDEVDSILIDEARTPLIISGQVERSQEKYKQAAQVVENLKRAIDTSKDGIDPEGDYEVDEKQRSCILTDEGFANTEKLLNVQDLFDPKEPWAHYVTNALKAKELFIKDVNYIVRNDEAVIVDEFTGRVMPGRRWSDGQHQAIEAKENLSIQPETQTLASITYQNFFLLYPRLSGMTGTAKTEEVEFEKTYKLQTTVVPTNRKISRQDWVDQVFKTEAAKWRAVAKETADIHQKGRPVLVGTTSVEKSELLSTLLSEQQVPHNLLNAKPENVEREAEIVAQAGRAGAVTIATNMAGRGTDIILGGNSDYMARLKIKEILSNRLVKPEEGHKPPVSPQRKTKSAGFKEEKNKNLSISKQNQSKSFLNIFPVSLTEDTDAKLASLASKLVKEWGDRSLSSIELDDYIATAAEKTPTQDKNIKELRIAIQLIKNEYEEVLSQEETNVRRVGGLHVIGTERHESRRVDNQLRGRAGRQGDLGSTRFFLSLEDNLLRIFGGDRVAGLMNAFRVEEDMPIESGMLTRSLEGAQKKVETYYYDIRKQIFEYDEVMNNQRKAVYSERRRVLDGRELKLQVIGYGQRTMEEIVEAYVNEDLPPEEWNLTNLVSKVKEFIYLLEDLKPEDLLGLNKNELKDFLKEQLRNAYDMKEAKVEQSHPGIMRQAERFFILQQLDTLWREHLQSMDSLKESVGLRGYGQKDPLIEYKNEGYDMFLEMMVNMRRNVIYSMFMFQPAQKKVEA.

ATP-binding positions include Q90, 108-112 (GEGKT), and D509. The tract at residues 533–565 (VKPEEGHKPPVSPQRKTKSAGFKEEKNKNLSIS) is disordered.

This sequence belongs to the SecA family. Monomer and homodimer. Part of the essential Sec protein translocation apparatus which comprises SecA, SecYEG and auxiliary proteins SecDF. Other proteins may also be involved.

The protein resides in the cell inner membrane. Its subcellular location is the cellular thylakoid membrane. It is found in the cytoplasm. It catalyses the reaction ATP + H2O + cellular proteinSide 1 = ADP + phosphate + cellular proteinSide 2.. Part of the Sec protein translocase complex. Interacts with the SecYEG preprotein conducting channel. Has a central role in coupling the hydrolysis of ATP to the transfer of proteins into and across the cell membrane, serving as an ATP-driven molecular motor driving the stepwise translocation of polypeptide chains across the membrane. In terms of biological role, probably participates in protein translocation into and across both the cytoplasmic and thylakoid membranes in cyanobacterial cells. The protein is Protein translocase subunit SecA of Prochlorococcus marinus (strain NATL1A).